Reading from the N-terminus, the 61-residue chain is uncharacterized protein (61 aa).

Topologically, residues 1 to 20 (MSSTTSTINLSSLGSAINDV) are extracellular. The chain crosses the membrane as a helical span at residues 21-41 (LNIIVQYLPVFVTVAVLFGII). At 42–61 (TYMTGGLGGLFSGITGIFGS) the chain is on the cytoplasmic side.

It localises to the host membrane. This is an uncharacterized protein from Acidianus filamentous virus 2 (isolate Italy/Pozzuoli) (AFV-2).